The chain runs to 412 residues: uncharacterized protein (412 aa).

H49 provides a ligand contact to Zn(2+). Residue E52 is the Proton acceptor of the active site. Zn(2+) contacts are provided by H53 and E129.

This sequence belongs to the peptidase M16 family. It depends on Zn(2+) as a cofactor.

This is an uncharacterized protein from Rickettsia felis (strain ATCC VR-1525 / URRWXCal2) (Rickettsia azadi).